A 1373-amino-acid polypeptide reads, in one-letter code: DNA-directed RNA polymerase subunit beta (1373 aa).

It belongs to the RNA polymerase beta chain family. As to quaternary structure, the RNAP catalytic core consists of 2 alpha, 1 beta, 1 beta' and 1 omega subunit. When a sigma factor is associated with the core the holoenzyme is formed, which can initiate transcription.

The enzyme catalyses RNA(n) + a ribonucleoside 5'-triphosphate = RNA(n+1) + diphosphate. DNA-dependent RNA polymerase catalyzes the transcription of DNA into RNA using the four ribonucleoside triphosphates as substrates. The chain is DNA-directed RNA polymerase subunit beta from Rickettsia conorii (strain ATCC VR-613 / Malish 7).